The following is a 66-amino-acid chain: Large ribosomal subunit protein bL33c (66 aa).

It belongs to the bacterial ribosomal protein bL33 family.

The protein resides in the plastid. It is found in the chloroplast. This Glycine max (Soybean) protein is Large ribosomal subunit protein bL33c.